A 324-amino-acid chain; its full sequence is Archaeosine synthase subunit beta (324 aa).

In terms of domain architecture, Radical SAM core spans 12–254 (GKPGTALFII…LIWAKRKFPN (243 aa)). Positions 27, 36, and 39 each coordinate [4Fe-4S] cluster.

The protein belongs to the radical SAM superfamily. RaSEA family. As to quaternary structure, forms a robust complex with the archaeosine synthase alpha subunit ArcS, likely an alpha(2)beta(2) heterotetrameric structure. [4Fe-4S] cluster is required as a cofactor.

The enzyme catalyses 7-N-[(5S)-5-amino-5-carboxypentyl]formamidino-7-deazaguanosine(15) in tRNA + S-adenosyl-L-methionine = archaeosine(15) in tRNA + L-1-piperideine-6-carboxylate + 5'-deoxyadenosine + L-methionine + 2 H(+). It participates in tRNA modification; archaeosine-tRNA biosynthesis. Functionally, radical SAM enzyme involved in the synthesis of archaeosine, a modified nucleoside present in the dihydrouridine loop (D-loop) of archaeal tRNAs. Catalyzes the cleavage of the C(epsilon)-N bond of the lysine moiety of q0kN15-tRNA, leading to the formation of archaeosine at position 15 in tRNAs. The polypeptide is Archaeosine synthase subunit beta (Thermococcus kodakarensis (strain ATCC BAA-918 / JCM 12380 / KOD1) (Pyrococcus kodakaraensis (strain KOD1))).